We begin with the raw amino-acid sequence, 257 residues long: MKRERNNSLDPLEISEWRWSEFLDDAIKALELFDIEPYPIPEEFLTKEETIKFKNNQIKVKALTWACRTTKIRQARAACIEAGPAASVLNLVINPFHNFELPFFGADFVTLPSGHLLALDLQPVLKKDEIHNQKVWSKLIPIHDHWQSLLPSGGPIPQEAETFFSPGFLWTRLPLDDQGSKLISKVIRPAFQEYLTLYIDLISDAQEVSKERSLEILSGQKAYINYRAEKDPARGMLARFFGKDWTEQYIHKVLFDL.

Belongs to the HY2 family.

It carries out the reaction (3Z)-phycoerythrobilin + oxidized 2[4Fe-4S]-[ferredoxin] = 15,16-dihydrobiliverdin + reduced 2[4Fe-4S]-[ferredoxin] + 2 H(+). In terms of biological role, catalyzes the two-electron reduction of the C2 and C3(1) diene system of 15,16-dihydrobiliverdin. The polypeptide is Phycoerythrobilin:ferredoxin oxidoreductase (Prochlorococcus marinus (strain MIT 9211)).